Consider the following 675-residue polypeptide: UvrABC system protein B (675 aa).

Residues 35-422 (EGVSDGLMFQ…ADNVVEQVVR (388 aa)) form the Helicase ATP-binding domain. 48–55 (GVTGSGKT) is an ATP binding site. The Beta-hairpin motif lies at 101-124 (YYDYYQPEAYVPTRDLFIEKDSSI). Residues 439-605 (QVDDLLGEIH…GVSKAVRELI (167 aa)) form the Helicase C-terminal domain. Residues 633–668 (AREIRRLEKLMMDHARNLEFEQAAAARDALNALKSR) enclose the UVR domain.

This sequence belongs to the UvrB family. Forms a heterotetramer with UvrA during the search for lesions. Interacts with UvrC in an incision complex.

The protein localises to the cytoplasm. Its function is as follows. The UvrABC repair system catalyzes the recognition and processing of DNA lesions. A damage recognition complex composed of 2 UvrA and 2 UvrB subunits scans DNA for abnormalities. Upon binding of the UvrA(2)B(2) complex to a putative damaged site, the DNA wraps around one UvrB monomer. DNA wrap is dependent on ATP binding by UvrB and probably causes local melting of the DNA helix, facilitating insertion of UvrB beta-hairpin between the DNA strands. Then UvrB probes one DNA strand for the presence of a lesion. If a lesion is found the UvrA subunits dissociate and the UvrB-DNA preincision complex is formed. This complex is subsequently bound by UvrC and the second UvrB is released. If no lesion is found, the DNA wraps around the other UvrB subunit that will check the other stand for damage. The sequence is that of UvrABC system protein B from Bordetella bronchiseptica (strain ATCC BAA-588 / NCTC 13252 / RB50) (Alcaligenes bronchisepticus).